A 606-amino-acid polypeptide reads, in one-letter code: MNMFPSLMLTSLLMLTLPIITTTINTHKNSTYPYYVKNIISYAFITSLIPTMMFIHSGQEMIISNWHWMTIQTLKLSLSFKLDYFSMIFVPVALFVTWSIMEFSMWYMHSDPHITQFFKYLLMFLITMMILVTANNLFQLFIGWEGVGIMSFLLISWWYGRTDANTAALQAILYNRIGDIGFIMSMAWFLFNTNSWDLQQIFSLNYNHTDLPLMGLLLAATGKSAQFGLHPWLPSAMEGPTPVSALLHSSTMVVAGVFLLIRFHPLMENNKTVQTFTLCLGAITTLFTAICALTQNDIKKIIAFSTSSQLGLMIVTIGINQPYLAFLHICTHAFFKAMLFMCSGSIIHNLNDEQDIRKMGGLFKAMPFTSTSLIIGSLALTGMPFLTGFYSKDLIIETANTSYTNAWALLITLIATSLTAAYSTRMIFFTLLGQPRSLTLITINENNPLLMNSIKRLLIGSIFAGFFISNNIYPTTIPKTTMPHYLKLTALAVTILGFMMALELSLATYNLKLKHPSSPLKFSNLLGYFPTIFHRLPPLMGLSTSQKSASLLLDLIWLEKILPKSISQFQVKTSTLVSNQKGLIKLYFLSFLVTLTLSLLLLMPHG.

The next 16 helical transmembrane spans lie at 4–24, 38–58, 87–107, 114–134, 140–160, 171–191, 213–233, 241–261, 273–293, 301–320, 325–347, 366–386, 409–429, 457–477, 488–508, and 583–603; these read FPSL…TTTI, NIIS…IHSG, MIFV…SMWY, ITQF…LVTA, LFIG…WWYG, AILY…WFLF, LMGL…HPWL, TPVS…FLLI, VQTF…ICAL, IIAF…IGIN, AFLH…GSII, MPFT…MPFL, LLIT…MIFF, LLIG…PTTI, LTAL…SLAT, and LIKL…LLLM.

This sequence belongs to the complex I subunit 5 family. As to quaternary structure, core subunit of respiratory chain NADH dehydrogenase (Complex I) which is composed of 45 different subunits.

Its subcellular location is the mitochondrion inner membrane. It carries out the reaction a ubiquinone + NADH + 5 H(+)(in) = a ubiquinol + NAD(+) + 4 H(+)(out). In terms of biological role, core subunit of the mitochondrial membrane respiratory chain NADH dehydrogenase (Complex I) which catalyzes electron transfer from NADH through the respiratory chain, using ubiquinone as an electron acceptor. Essential for the catalytic activity and assembly of complex I. The protein is NADH-ubiquinone oxidoreductase chain 5 (MT-ND5) of Ceratotherium simum (White rhinoceros).